A 626-amino-acid chain; its full sequence is Leucine aminopeptidase 2-1 (626 aa).

Substrate-binding positions include 134 to 136 (QCQ) and 259 to 264 (PYGGME). A Zn(2+)-binding site is contributed by histidine 288. Catalysis depends on glutamate 289, which acts as the Proton acceptor. Zn(2+) contacts are provided by histidine 292 and glutamate 311. Tyrosine 389 functions as the Proton donor in the catalytic mechanism.

The protein belongs to the peptidase M1 family. It depends on Zn(2+) as a cofactor.

The protein localises to the cytoplasm. The protein resides in the nucleus. It catalyses the reaction an epoxide + H2O = an ethanediol. Aminopeptidase that preferentially cleaves di- and tripeptides. Also has low epoxide hydrolase activity (in vitro). Can hydrolyze the epoxide leukotriene LTA(4) but it forms preferentially 5,6-dihydroxy-7,9,11,14-eicosatetraenoic acid rather than the cytokine leukotriene B(4) as the product compared to the homologous mammalian enzyme (in vitro). The polypeptide is Leucine aminopeptidase 2-1 (LKA4) (Scheffersomyces stipitis (strain ATCC 58785 / CBS 6054 / NBRC 10063 / NRRL Y-11545) (Yeast)).